A 746-amino-acid polypeptide reads, in one-letter code: NAD(P)H-quinone oxidoreductase subunit 5, chloroplastic (746 aa).

Helical transmembrane passes span 9–29, 40–60, 89–109, 125–145, 147–167, 185–205, 221–241, 258–278, 280–300, 327–347, 354–374, 396–416, 425–445, 547–567, 608–628, and 723–743; these read WIIP…LLLF, WTFL…YLSI, IDPL…LVLI, FAYM…SNLI, VYFF…FWFT, GDFG…SFEF, VNLL…IAKS, TPIS…FLVA, LLPL…IGII, LGYM…FHLI, ALLF…VGYS, TAFL…CFWS, LLFS…TAFY, ILFP…IGIP, FSVS…KPFY, and YLFL…FFYF.

It belongs to the complex I subunit 5 family. As to quaternary structure, NDH is composed of at least 16 different subunits, 5 of which are encoded in the nucleus.

The protein resides in the plastid. It localises to the chloroplast thylakoid membrane. It carries out the reaction a plastoquinone + NADH + (n+1) H(+)(in) = a plastoquinol + NAD(+) + n H(+)(out). It catalyses the reaction a plastoquinone + NADPH + (n+1) H(+)(in) = a plastoquinol + NADP(+) + n H(+)(out). NDH shuttles electrons from NAD(P)H:plastoquinone, via FMN and iron-sulfur (Fe-S) centers, to quinones in the photosynthetic chain and possibly in a chloroplast respiratory chain. The immediate electron acceptor for the enzyme in this species is believed to be plastoquinone. Couples the redox reaction to proton translocation, and thus conserves the redox energy in a proton gradient. This Arabidopsis thaliana (Mouse-ear cress) protein is NAD(P)H-quinone oxidoreductase subunit 5, chloroplastic (ndhF).